A 529-amino-acid chain; its full sequence is Hyaluronidase PH-20 (529 aa).

The first 35 residues, Met-1 to Ala-35, serve as a signal peptide directing secretion. 2 disulfides stabilise this stretch: Cys-59/Cys-351 and Cys-223/Cys-237. N-linked (GlcNAc...) asparagine glycosylation is present at Asn-81. The active-site Proton donor is Glu-147. N-linked (GlcNAc...) asparagine glycans are attached at residues Asn-165 and Asn-179. Residues Asn-253 and Asn-368 are each glycosylated (N-linked (GlcNAc...) asparagine). 3 cysteine pairs are disulfide-bonded: Cys-376-Cys-387, Cys-381-Cys-435, and Cys-437-Cys-464. N-linked (GlcNAc...) asparagine glycosylation is present at Asn-401. The tract at residues Asp-478–Pro-502 is disordered. A compositionally biased stretch (polar residues) spans Ser-487 to Pro-502. A lipid anchor (GPI-anchor amidated serine) is attached at Ser-492. Positions Ile-493–Leu-529 are cleaved as a propeptide — removed in mature form.

The protein belongs to the glycosyl hydrolase 56 family. Post-translationally, endoproteolysis (toward the C-terminus producing two disulfide-linked fragments) could activate PH-20. In terms of tissue distribution, testis.

It localises to the cell membrane. It carries out the reaction Random hydrolysis of (1-&gt;4)-linkages between N-acetyl-beta-D-glucosamine and D-glucuronate residues in hyaluronate.. In terms of biological role, involved in sperm-egg adhesion. Upon fertilization sperm must first penetrate a layer of cumulus cells that surrounds the egg before reaching the zona pellucida. The cumulus cells are embedded in a matrix containing hyaluronic acid which is formed prior to ovulation. This protein aids in penetrating the layer of cumulus cells by digesting hyaluronic acid. The protein is Hyaluronidase PH-20 (SPAM1) of Cavia porcellus (Guinea pig).